The following is a 200-amino-acid chain: Probable nicotinate-nucleotide adenylyltransferase (200 aa).

This sequence belongs to the NadD family.

The enzyme catalyses nicotinate beta-D-ribonucleotide + ATP + H(+) = deamido-NAD(+) + diphosphate. Its pathway is cofactor biosynthesis; NAD(+) biosynthesis; deamido-NAD(+) from nicotinate D-ribonucleotide: step 1/1. Catalyzes the reversible adenylation of nicotinate mononucleotide (NaMN) to nicotinic acid adenine dinucleotide (NaAD). The polypeptide is Probable nicotinate-nucleotide adenylyltransferase (Leifsonia xyli subsp. xyli (strain CTCB07)).